The sequence spans 374 residues: UDP-N-acetylglucosamine--N-acetylmuramyl-(pentapeptide) pyrophosphoryl-undecaprenol N-acetylglucosamine transferase (374 aa).

Residues 13-15, Asn-124, Arg-165, Ser-193, and Gln-294 each bind UDP-N-acetyl-alpha-D-glucosamine; that span reads TGG.

It belongs to the glycosyltransferase 28 family. MurG subfamily.

The protein resides in the cell inner membrane. The catalysed reaction is di-trans,octa-cis-undecaprenyl diphospho-N-acetyl-alpha-D-muramoyl-L-alanyl-D-glutamyl-meso-2,6-diaminopimeloyl-D-alanyl-D-alanine + UDP-N-acetyl-alpha-D-glucosamine = di-trans,octa-cis-undecaprenyl diphospho-[N-acetyl-alpha-D-glucosaminyl-(1-&gt;4)]-N-acetyl-alpha-D-muramoyl-L-alanyl-D-glutamyl-meso-2,6-diaminopimeloyl-D-alanyl-D-alanine + UDP + H(+). It functions in the pathway cell wall biogenesis; peptidoglycan biosynthesis. Its function is as follows. Cell wall formation. Catalyzes the transfer of a GlcNAc subunit on undecaprenyl-pyrophosphoryl-MurNAc-pentapeptide (lipid intermediate I) to form undecaprenyl-pyrophosphoryl-MurNAc-(pentapeptide)GlcNAc (lipid intermediate II). In Rhizobium meliloti (strain 1021) (Ensifer meliloti), this protein is UDP-N-acetylglucosamine--N-acetylmuramyl-(pentapeptide) pyrophosphoryl-undecaprenol N-acetylglucosamine transferase.